We begin with the raw amino-acid sequence, 374 residues long: Acid phosphatase-like protein XcAP-1 (374 aa).

Residues 1-17 (TTIILLIAFAAIQLSKA) form the signal peptide. Val-25 is a binding site for serotonin. 3 cysteine pairs are disulfide-bonded: Cys-144-Cys-372, Cys-165-Cys-219, and Cys-345-Cys-349. Residues Asp-245, Asp-249, Asn-271, and Gln-283 each contribute to the serotonin site.

It belongs to the histidine acid phosphatase family.

It localises to the secreted. In terms of biological role, probably modulates blood feeding of fleas on vertebrate species by binding and sequestering different mediators involved in the host response. Binds biogenic amines: serotonin, adrenaline and noradrenaline. Binds leukotriene C4. Does not bind histamine, leukotriene B4, leukotriene D4, leukotriene E4, ADP, and stable analogs of thromboxane A2: U-46619 and cTXA2. The sequence is that of Acid phosphatase-like protein XcAP-1 from Xenopsylla cheopis (Oriental rat flea).